Consider the following 94-residue polypeptide: Co-chaperonin GroES (94 aa).

The tract at residues 17 to 53 (DSNPNSPIQLPDSAKKKPTKGKVVSVGPGASNSDGKV) is disordered.

It belongs to the GroES chaperonin family. As to quaternary structure, heptamer of 7 subunits arranged in a ring. Interacts with the chaperonin GroEL.

It is found in the cytoplasm. Functionally, together with the chaperonin GroEL, plays an essential role in assisting protein folding. The GroEL-GroES system forms a nano-cage that allows encapsulation of the non-native substrate proteins and provides a physical environment optimized to promote and accelerate protein folding. GroES binds to the apical surface of the GroEL ring, thereby capping the opening of the GroEL channel. This is Co-chaperonin GroES from Anaplasma phagocytophilum (strain HZ).